A 234-amino-acid chain; its full sequence is Large ribosomal subunit protein uL1 (234 aa).

It belongs to the universal ribosomal protein uL1 family. Part of the 50S ribosomal subunit.

Binds directly to 23S rRNA. The L1 stalk is quite mobile in the ribosome, and is involved in E site tRNA release. In terms of biological role, protein L1 is also a translational repressor protein, it controls the translation of the L11 operon by binding to its mRNA. This chain is Large ribosomal subunit protein uL1, found in Serratia proteamaculans (strain 568).